We begin with the raw amino-acid sequence, 63 residues long: Beta-defensin 35 (63 aa).

The signal sequence occupies residues Met-1 to Gly-23. 3 disulfides stabilise this stretch: Cys-31–Cys-58, Cys-38–Cys-52, and Cys-42–Cys-59.

Belongs to the beta-defensin family. In terms of tissue distribution, expressed in testis, epididymis (caput, corpus and cauda), kidney and neonatal and adult brain.

It is found in the secreted. Its function is as follows. Has antibacterial activity. The chain is Beta-defensin 35 (Defb35) from Mus musculus (Mouse).